Reading from the N-terminus, the 433-residue chain is Cell division protein FtsZ homolog 1, chloroplastic (433 aa).

A chloroplast-targeting transit peptide spans M1 to C66. S67 carries the N-acetylserine modification. GTP contacts are provided by residues G83 to N87, G170 to G172, E201, R205, and D249. The tract at residues G399–F433 is disordered. The segment covering Q414–F433 has biased composition (low complexity).

The protein belongs to the FtsZ family. Aggregates to form a contractile ring-like structure; contraction of the ring was accompanied by an increase in the filament turnover rate. This aggregation is regulated in midchloroplast stroma by MIND1 (repressor) and MINE1 (promoter). Self-interacts and binds to FTSZ2-1 in heteromers to form two morphologically distinct types of filaments, termed type-I (smooth filaments) and type-II (rough filaments), in a GTP-dependent manner. Interacts with ARC3. Part of a complex made of ARC3, ARC6, FTSZ1 and FTSZ2. As to expression, in pollen grain, restricted to plastids of vegetative cells. Also present in pollen tubes plastids.

Its subcellular location is the plastid. The protein localises to the chloroplast stroma. It is found in the chloroplast thylakoid membrane. In terms of biological role, exhibits GTPase activity. Component of the plastid division machinery that forms a contractile ring at the division site. Required for plastid division in a dose-dependent manner. Involved in epidermal plastids division in a MINE1-dependent manner. Involved in blue light-induced chloroplast movements. May regulate thylakoid development. In the vegetative shoot apex, at the shoot apical meristem (SAM), where the proplastid-to-chloroplast transition takes place, contributes equally with FTSZ2-1 in the L2 layer to plastid division. This Arabidopsis thaliana (Mouse-ear cress) protein is Cell division protein FtsZ homolog 1, chloroplastic.